A 236-amino-acid chain; its full sequence is uncharacterized protein (236 aa).

The helical transmembrane segment at 15–34 threads the bilayer; that stretch reads GGMAHIISEAVIAGSIGLYF. Positions 36–71 form a coiled coil; that stretch reads KKISALEQTVQELQSQLEVQNNQLQWLIQQQTRRLA. Disordered regions lie at residues 83–113 and 185–236; these read SPLP…FQFK and ATTQ…IDCE. Polar residues-rich tracts occupy residues 93 to 102 and 185 to 195; these read QQSTTTNAAG and ATTQVSTFSKP. Positions 225-236 are enriched in basic and acidic residues; the sequence is ALDKILNDIDCE.

The protein resides in the membrane. This is an uncharacterized protein from Aedes vexans (Inland floodwater mosquito).